The following is a 947-amino-acid chain: Transcriptional regulator WAR1 (947 aa).

The span at Met1–Ser10 shows a compositional bias: basic and acidic residues. Residues Met1–Val52 form a disordered region. Over residues Ser19 to Ser38 the composition is skewed to low complexity. A DNA-binding region (zn(2)-C6 fungal-type) is located at residues Cys54–Cys86. The segment at Arg96–Asn222 is disordered. Low complexity predominate over residues Asn129–Asn142. Polar residues-rich tracts occupy residues Asp143–Pro158 and Gln167–Ala185.

Homodimer.

It is found in the nucleus. Its function is as follows. Transcription factor required for yeast cell adherence to silicone substrate. Plays a role in resistance to weak organic acids such as acetate and sorbate. Binds in vitro to a nitric oxide-responsive element (NORE) but seems not to be involved in response to nitrosative stress. The chain is Transcriptional regulator WAR1 (WAR1) from Candida albicans (strain SC5314 / ATCC MYA-2876) (Yeast).